Here is a 212-residue protein sequence, read N- to C-terminus: MQGIFITFEGPDGAGKTSVLKEVSERLAKESKRKIVTTREPGGIPIAEKIRTVILDPRNDRMDERTEALLYAAARRQHLVEKILPALEAGHLVLCDRFVDSSLAYQGAGRRIGIAPIASINAFATEGVSPDFTIYLDVDSDTGLRRIQENRTQQIDRLDSEGLEFHQRVRHEYLKLAEENPQRIKKIDARMSLELVVEATYQAIIERYPENF.

Residue 10–17 coordinates ATP; the sequence is GPDGAGKT.

The protein belongs to the thymidylate kinase family.

The catalysed reaction is dTMP + ATP = dTDP + ADP. Functionally, phosphorylation of dTMP to form dTDP in both de novo and salvage pathways of dTTP synthesis. The sequence is that of Thymidylate kinase from Enterococcus faecalis (strain ATCC 700802 / V583).